The primary structure comprises 272 residues: Dioscorin DB3L (272 aa).

A signal peptide spans 1–25 (MSSSTLFHLFLLSSLLFSCLSNARP). Residues 28-263 (DDFSYIEGSP…LKFRTIFFYP (236 aa)) form the Alpha-carbonic anhydrase domain. Cys53 and Cys213 are joined by a disulfide.

This sequence belongs to the alpha-class carbonic anhydrase family. In terms of assembly, homodimer; disulfide-linked. In terms of processing, not glycosylated. As to expression, expressed in tuber (at protein level).

Its activity is regulated as follows. Loss of hemagglutinating activity by EDTA treatment. The activity is fully recovered by the addition of 5 mM Ca(2+) ions, but not with Mg(2+) and Mn 2(+). Hemagglutination activity is inhibited by maltose and its derivatives, with maltopentaose and maltohexaose being the best inhibitors followed by maltose and iso maltose. Not inhibited by glycoproteins. In terms of biological role, maltose-binding lectin. No affinity is detected toward glucose. Has hemagglutinating activity against rabbit erythrocytes at 3.9 ug/ml. No carbonate dehydratase or trypsin inhibitor activity detected by measuring the hydrolysis of 4-nitrophenyl acetate or the inhibition of bovine trypsin-catalyzed hydrolysis of N-benzoyl-L-arginine ethyl ester, respectively. The polypeptide is Dioscorin DB3L (Dioscorea polystachya (Chinese yam)).